We begin with the raw amino-acid sequence, 350 residues long: Ion-translocating oxidoreductase complex subunit D (350 aa).

A run of 4 helical transmembrane segments spans residues 37–57 (YFFGFGVLIQVMLAIVVALTA), 68–88 (AVLSTISDNSALLTAILIGVA), 89–109 (IPPIAPWWLVVIGTLFAIVLV), and 120–140 (IFNPAMAAYVMLLISFPVQMT). At Thr185 the chain carries FMN phosphoryl threonine. Transmembrane regions (helical) follow at residues 212–232 (GYGVGWFWVNMAYLAGGLIML), 239–259 (WHISFAILGSLFVCSSFGYLL), 265–285 (VGPLLQLFSGATMIAAFFIAT), 291–311 (ATSVKGRLLFGTLIGVMVYVI), and 315–335 (GGYPDAFAFAVLLANLCAPFI).

The protein belongs to the NqrB/RnfD family. The complex is composed of six subunits: RnfA, RnfB, RnfC, RnfD, RnfE and RnfG. Requires FMN as cofactor.

The protein localises to the cell inner membrane. Its function is as follows. Part of a membrane-bound complex that couples electron transfer with translocation of ions across the membrane. In Shewanella pealeana (strain ATCC 700345 / ANG-SQ1), this protein is Ion-translocating oxidoreductase complex subunit D.